A 299-amino-acid polypeptide reads, in one-letter code: Sulfate adenylyltransferase subunit 2 (299 aa).

This sequence belongs to the PAPS reductase family. CysD subfamily. Sulfate-activating enzymes, NodP and NodQ, may be physically associated.

The catalysed reaction is sulfate + ATP + H(+) = adenosine 5'-phosphosulfate + diphosphate. Functionally, proposed to provide activated sulfate for transfer to nod factor. The sequence is that of Sulfate adenylyltransferase subunit 2 (nodP) from Rhizobium meliloti (strain 1021) (Ensifer meliloti).